A 1846-amino-acid chain; its full sequence is Unconventional myosin-Vb (1846 aa).

The Myosin N-terminal SH3-like domain occupies 8-60 (SRYTRVWIPDPDEVWRSAELTKDYKDGDESLQLRLEDDTILDYPIDVQNNQVP). The segment at 21-40 (VWRSAELTKDYKDGDESLQL) is requires for interaction with LIMA1. Residues 69–763 (VGENDLTALS…QVAYLEKLRA (695 aa)) form the Myosin motor domain. Residue 163–170 (GESGAGKT) coordinates ATP. Positions 599-629 (VPATNTAKSRSSSKINVRSSRPLMKAPNKEH) are disordered. Over residues 607–619 (SRSSSKINVRSSR) the composition is skewed to low complexity. The segment at 641–663 (LNLLMETLNATTPHYVRCIKPND) is actin-binding. 6 consecutive IQ domains span residues 767 to 788 (REAT…KYRR), 789 to 813 (LRAA…EHLR), 814 to 837 (RTRA…YCRV), 838 to 861 (RRAA…PPVL), 862 to 884 (TEHK…HFQR), and 885 to 914 (QRDA…EARS). Coiled coils occupy residues 915 to 1272 (AEHL…ADQR) and 1334 to 1450 (LKQV…RHHE). The disordered stretch occupies residues 1088–1122 (RDEQQTPGHRKNPSNQSSLESDSNYPSISTSEIGD). Residues 1100 to 1120 (PSNQSSLESDSNYPSISTSEI) are compositionally biased toward polar residues. At serine 1444 the chain carries Phosphoserine. The 278-residue stretch at 1524 to 1801 (SSTINGIKKV…IRTIQAQLQE (278 aa)) folds into the Dilute domain.

Belongs to the TRAFAC class myosin-kinesin ATPase superfamily. Myosin family. As to quaternary structure, component of the CART complex, at least composed of ACTN4, HGS/HRS, MYO5B and TRIM3. Interacts with RAB11FIP2. Interacts with RAB11A and RAB8A. Found in a complex with CFTR and RAB11A. Interacts with NPC1L1. Interacts with LIMA1.

The protein resides in the cytoplasm. Its function is as follows. May be involved in vesicular trafficking via its association with the CART complex. The CART complex is necessary for efficient transferrin receptor recycling but not for EGFR degradation. Required in a complex with RAB11A and RAB11FIP2 for the transport of NPC1L1 to the plasma membrane. Together with RAB11A participates in CFTR trafficking to the plasma membrane and TF (transferrin) recycling in nonpolarized cells. Together with RAB11A and RAB8A participates in epithelial cell polarization. Together with RAB25 regulates transcytosis. Required for proper localization of bile salt export pump ABCB11 at the apical/canalicular plasma membrane of hepatocytes. The protein is Unconventional myosin-Vb (Myo5b) of Rattus norvegicus (Rat).